Consider the following 21-residue polypeptide: Short neurotoxin E1 (21 aa).

Positions methionine 1–glutamine 21 are disordered.

In terms of processing, contains 4 disulfide bonds. As to expression, expressed by the venom gland.

The protein localises to the secreted. Binds to muscle nicotinic acetylcholine receptor (nAChR) and inhibit acetylcholine from binding to the receptor, thereby impairing neuromuscular transmission. This Micrurus pyrrhocryptus (Coral snake) protein is Short neurotoxin E1.